The primary structure comprises 231 residues: Enolase-phosphatase E1 (231 aa).

It belongs to the HAD-like hydrolase superfamily. MasA/MtnC family. In terms of assembly, monomer. It depends on Mg(2+) as a cofactor.

The catalysed reaction is 5-methylsulfanyl-2,3-dioxopentyl phosphate + H2O = 1,2-dihydroxy-5-(methylsulfanyl)pent-1-en-3-one + phosphate. Its pathway is amino-acid biosynthesis; L-methionine biosynthesis via salvage pathway; L-methionine from S-methyl-5-thio-alpha-D-ribose 1-phosphate: step 3/6. It participates in amino-acid biosynthesis; L-methionine biosynthesis via salvage pathway; L-methionine from S-methyl-5-thio-alpha-D-ribose 1-phosphate: step 4/6. Its function is as follows. Bifunctional enzyme that catalyzes the enolization of 2,3-diketo-5-methylthiopentyl-1-phosphate (DK-MTP-1-P) into the intermediate 2-hydroxy-3-keto-5-methylthiopentenyl-1-phosphate (HK-MTPenyl-1-P), which is then dephosphorylated to form the acireductone 1,2-dihydroxy-3-keto-5-methylthiopentene (DHK-MTPene). This Stenotrophomonas maltophilia (strain K279a) protein is Enolase-phosphatase E1.